Here is a 200-residue protein sequence, read N- to C-terminus: NADH-quinone oxidoreductase chain 10 (200 aa).

Transmembrane regions (helical) follow at residues 2–22, 26–46, 51–71, 90–110, and 144–164; these read MTFA…MVVI, PVHS…LFVL, FVAM…FLFV, LPLA…AFSG, and VLMF…AIVL.

Belongs to the complex I subunit 6 family. NDH-1 is composed of at least 14 different subunits, Nqo1 to Nqo14. The complex has a L-shaped structure, with the hydrophobic arm (subunits Nqo7, Nqo8, Nqo10 to Nqo14) embedded in the inner membrane and the hydrophilic peripheral arm (subunits Nqo1 to Nqo6, Nqo9) protruding into the bacterial cytoplasm. The hydrophilic domain contains all the redox centers.

The protein localises to the cell inner membrane. It carries out the reaction a quinone + NADH + 5 H(+)(in) = a quinol + NAD(+) + 4 H(+)(out). NDH-1 shuttles electrons from NADH, via FMN and iron-sulfur (Fe-S) centers, to quinones in the respiratory chain. The immediate electron acceptor for the enzyme in this species is believed to be ubiquinone. Couples the redox reaction to proton translocation (for every two electrons transferred, four hydrogen ions are translocated across the cytoplasmic membrane), and thus conserves the redox energy in a proton gradient. This Paracoccus denitrificans protein is NADH-quinone oxidoreductase chain 10.